The following is a 382-amino-acid chain: Protein delta homolog 2 (382 aa).

The N-terminal stretch at 1 to 26 is a signal peptide; it reads MPSGCRCLNLVCLLCILGATSQPARA. EGF-like domains are found at residues 27 to 58, 62 to 89, 91 to 129, and 131 to 172; these read DDCS…LHCE, RMPG…KFCD, DEHI…RGCE, and KAGP…AHCE. The Extracellular segment spans residues 27 to 305; that stretch reads DDCSSHCDLA…RQEAGLGESS (279 aa). 17 disulfide bridges follow: C29-C40, C33-C46, C48-C57, C66-C71, C79-C88, C95-C107, C101-C117, C119-C128, C135-C148, C142-C160, C162-C171, C178-C189, C183-C198, C200-C209, C216-C227, C221-C236, and C238-C247. N157 carries N-linked (GlcNAc...) asparagine glycosylation. Residues 174–210 enclose the EGF-like 5; calcium-binding domain; it reads NVDDCLMRPCANGATCIDGINRFSCLCPEGFAGRFCT. In terms of domain architecture, EGF-like 6; calcium-binding spans 212 to 248; sequence NLDDCASRPCQRGARCRDRVHDFDCLCPSGYGGKTCE. A helical transmembrane segment spans residues 306 to 326; the sequence is LVALVVFGSLTAALVLATVLL. The Cytoplasmic segment spans residues 327 to 382; the sequence is TLRAWRRGICPTGPCCDPAPHYAPARQDQECQVSMLPAGFPLSPDLPPEPGKTTAL.

The protein resides in the membrane. Its function is as follows. Regulates adipogenesis. This chain is Protein delta homolog 2 (Dlk2), found in Rattus norvegicus (Rat).